The primary structure comprises 495 residues: Leucine aminopeptidase 2 (495 aa).

Positions 1 to 21 are cleaved as a signal peptide; that stretch reads MKSQLLSLAVAVTTISQGVVG. Residues 124 to 218 enclose the PA domain; sequence PPASKIMAEL…EDGKNLATLV (95 aa). N-linked (GlcNAc...) asparagine glycosylation is found at N142 and N235. Zn(2+)-binding residues include H259 and D271. N272 carries N-linked (GlcNAc...) asparagine glycosylation. E303 acts as the Proton acceptor in catalysis. The Zn(2+) site is built by E304 and D332. N-linked (GlcNAc...) asparagine glycosylation is present at N352. H430 is a Zn(2+) binding site.

Belongs to the peptidase M28 family. M28A subfamily. Monomer. The cofactor is Zn(2+).

The protein localises to the secreted. With respect to regulation, activity is inhibited by EDTA, o-phenanthroline, bestatin and amastatin. In terms of biological role, extracellular aminopeptidase that releases a wide variety of amino acids from natural peptides and contributes to pathogenicity. The sequence is that of Leucine aminopeptidase 2 (LAP2) from Trichophyton rubrum (Athlete's foot fungus).